The chain runs to 828 residues: MTEDVMNDDFDSLVTKPTEFIDYNCDINNGFNDLLKSQKFDKLGFNYNVLSILGCQSSGKSSLLNSVFGLDFDVMNTKLGHSQTTKGLWGALVIPKDTGSGNVTIVIDVEGTDSRERGEGRLTFEHRSALLCLAISDCVVINLWYHSLGNLTGSNYGLLKTVVEANLELAEASENTLASGDYKTVLCFCIRDWFPELAPLETVRQKVVNEYMLGIWNDINKPDKFKNSKLEDIFRFELYGFNHALVHPDEFAKDSSRFRLAWATSISPKSYSRAVPSDGFFYYASNILQTVKDQSHLDIPNQREMLANFRCQEIKGGVLDEMVPSISSMLTDAQSGVMDDFQHRAVELVDVAVGKYLELASRYDKTTSNKIGNELVISVFSKLQPVFDAIISHHCSDLAVRATVRLNEKFAISGKERSPMVGGQKAADVWPKFNMLTDEIKAELYNSLNSHILSCAINYSHESGIQAQSDFDTSAAVDMFNVTFKNEVESVRARHIRALLGQITDLVDSGFKVIGEALLERNVTSDKYWGDVNDLIDRAYSTCLDTMGPCYTGLVPSVQPNEFEYLAFMILLQATKCNLERTESRITDIILERFEQFFQYQEFNGETVPRDWGSYTEEELKQTYTQCKKEALNIVAVLRDCSPPTLEVPAFEVSSLKPNHVLYQELSAGVDSLRATTTSLSDEVLVDTVKACRKRFQEFFRTAQQIQSSSKNGISWKNIPPPFWILLLLCSWNELCSVLRIVFKVQVLIPLIILGFIVVQYFSHLVFGTSADAVFRPFKRQARELAMVGTKWIFKVATSTAAAAVNAGAKTTFLSDDDNDSGKKAEEN.

The Cytoplasmic segment spans residues 1–718 (MTEDVMNDDF…SSKNGISWKN (718 aa)). Residues 44–284 (GFNYNVLSIL…VPSDGFFYYA (241 aa)) form the GB1/RHD3-type G domain. GTP is bound at residue 54–61 (GCQSSGKS). Residues 719-739 (IPPPFWILLLLCSWNELCSVL) form a helical membrane-spanning segment. Over 740–742 (RIV) the chain is Lumenal. The chain crosses the membrane as a helical span at residues 743–763 (FKVQVLIPLIILGFIVVQYFS). Residues 764 to 828 (HLVFGTSADA…NDSGKKAEEN (65 aa)) lie on the Cytoplasmic side of the membrane.

Belongs to the TRAFAC class dynamin-like GTPase superfamily. GB1/RHD3 GTPase family. RHD3 subfamily.

The protein localises to the endoplasmic reticulum membrane. Probable GTP-binding protein that may be involved in cell development. The sequence is that of Protein SEY1 homolog from Babesia bovis.